Consider the following 269-residue polypeptide: Tryptophan synthase alpha chain (269 aa).

Active-site proton acceptor residues include glutamate 50 and aspartate 61.

This sequence belongs to the TrpA family. As to quaternary structure, tetramer of two alpha and two beta chains.

The enzyme catalyses (1S,2R)-1-C-(indol-3-yl)glycerol 3-phosphate + L-serine = D-glyceraldehyde 3-phosphate + L-tryptophan + H2O. It functions in the pathway amino-acid biosynthesis; L-tryptophan biosynthesis; L-tryptophan from chorismate: step 5/5. In terms of biological role, the alpha subunit is responsible for the aldol cleavage of indoleglycerol phosphate to indole and glyceraldehyde 3-phosphate. The polypeptide is Tryptophan synthase alpha chain (Buchnera aphidicola subsp. Baizongia pistaciae (strain Bp)).